Reading from the N-terminus, the 142-residue chain is Large ribosomal subunit protein uL11 (142 aa).

It belongs to the universal ribosomal protein uL11 family. Part of the ribosomal stalk of the 50S ribosomal subunit. Interacts with L10 and the large rRNA to form the base of the stalk. L10 forms an elongated spine to which L12 dimers bind in a sequential fashion forming a multimeric L10(L12)X complex. Post-translationally, one or more lysine residues are methylated.

In terms of biological role, forms part of the ribosomal stalk which helps the ribosome interact with GTP-bound translation factors. The polypeptide is Large ribosomal subunit protein uL11 (Glaesserella parasuis serovar 5 (strain SH0165) (Haemophilus parasuis)).